Reading from the N-terminus, the 375-residue chain is F-box/kelch-repeat protein At4g39240 (375 aa).

A compositionally biased stretch (low complexity) spans 1-15; the sequence is MPFSAASSSSVSSIA. The tract at residues 1–27 is disordered; the sequence is MPFSAASSSSVSSIAEEPPPKKQHDPS. Positions 31–77 constitute an F-box domain; sequence SSYLLLLPDEIILNCLARLPKCYYPVISLVSKTFRRLIASPEIYVER. 3 Kelch repeats span residues 140 to 186, 187 to 232, and 275 to 321; these read EIYV…FFDG, KLYV…RSFA, and KIYT…GNLA.

This Arabidopsis thaliana (Mouse-ear cress) protein is F-box/kelch-repeat protein At4g39240.